Consider the following 628-residue polypeptide: tRNA uridine 5-carboxymethylaminomethyl modification enzyme MnmG (628 aa).

An FAD-binding site is contributed by 13–18 (GAGHAG). 273–287 (GPRYCPSIEDKIVRF) is an NAD(+) binding site.

The protein belongs to the MnmG family. As to quaternary structure, homodimer. Heterotetramer of two MnmE and two MnmG subunits. The cofactor is FAD.

The protein resides in the cytoplasm. Functionally, NAD-binding protein involved in the addition of a carboxymethylaminomethyl (cmnm) group at the wobble position (U34) of certain tRNAs, forming tRNA-cmnm(5)s(2)U34. The chain is tRNA uridine 5-carboxymethylaminomethyl modification enzyme MnmG from Buchnera aphidicola subsp. Acyrthosiphon pisum (strain APS) (Acyrthosiphon pisum symbiotic bacterium).